A 346-amino-acid chain; its full sequence is Dynein regulatory complex protein 9 (346 aa).

Residues Met-299–Ala-308 show a composition bias toward basic and acidic residues. A disordered region spans residues Met-299–Lys-346. The region spanning Glu-305 to Lys-334 is the IQ domain. Basic residues predominate over residues Lys-323–Lys-346.

Belongs to the DRC9 family. In terms of assembly, component of the nexin-dynein regulatory complex (N-DRC). Interacts (via IQ domain) with calmodulin when calcium levels are low. Does not interact with calmodulin in the presence of Ca(2+). Interacts with hsp70 and may form a complex with camk4 and hsp70. Detected in adult testis, and at lower levels in brain, kidney and ovary.

The protein resides in the cytoplasm. The protein localises to the cell projection. It localises to the cilium. Its subcellular location is the flagellum. It is found in the cytoskeleton. The protein resides in the flagellum axoneme. In terms of biological role, component of the nexin-dynein regulatory complex (N-DRC), a key regulator of ciliary/flagellar motility which maintains the alignment and integrity of the distal axoneme and regulates microtubule sliding in motile axonemes. Binds calmodulin when cellular Ca(2+) levels are low and thereby contributes to the regulation of calcium and calmodulin-dependent protein kinase IV (camk4) activity; contributes to the regulation of camk4 signaling cascades. Plays a role in the regulation of definitive hematopoiesis via its effects on camk4. This chain is Dynein regulatory complex protein 9, found in Danio rerio (Zebrafish).